An 88-amino-acid polypeptide reads, in one-letter code: Putative membrane protein insertion efficiency factor (88 aa).

It belongs to the UPF0161 family.

Its subcellular location is the cell inner membrane. Functionally, could be involved in insertion of integral membrane proteins into the membrane. The chain is Putative membrane protein insertion efficiency factor from Rickettsia canadensis (strain McKiel).